The following is a 266-amino-acid chain: 3-methyl-2-oxobutanoate hydroxymethyltransferase 2 (266 aa).

2 residues coordinate Mg(2+): Asp-45 and Asp-84. Residues Asp-45–Ser-46, Asp-84, and Lys-112 each bind 3-methyl-2-oxobutanoate. Position 114 (Glu-114) interacts with Mg(2+). The active-site Proton acceptor is Glu-181.

Belongs to the PanB family. In terms of assembly, homodecamer; pentamer of dimers. Requires Mg(2+) as cofactor.

It is found in the cytoplasm. The catalysed reaction is 3-methyl-2-oxobutanoate + (6R)-5,10-methylene-5,6,7,8-tetrahydrofolate + H2O = 2-dehydropantoate + (6S)-5,6,7,8-tetrahydrofolate. The protein operates within cofactor biosynthesis; (R)-pantothenate biosynthesis; (R)-pantoate from 3-methyl-2-oxobutanoate: step 1/2. Catalyzes the reversible reaction in which hydroxymethyl group from 5,10-methylenetetrahydrofolate is transferred onto alpha-ketoisovalerate to form ketopantoate. The polypeptide is 3-methyl-2-oxobutanoate hydroxymethyltransferase 2 (Pseudomonas entomophila (strain L48)).